Reading from the N-terminus, the 133-residue chain is ATP synthase epsilon chain, chloroplastic (133 aa).

Belongs to the ATPase epsilon chain family. F-type ATPases have 2 components, CF(1) - the catalytic core - and CF(0) - the membrane proton channel. CF(1) has five subunits: alpha(3), beta(3), gamma(1), delta(1), epsilon(1). CF(0) has three main subunits: a, b and c.

Its subcellular location is the plastid. It localises to the chloroplast thylakoid membrane. Its function is as follows. Produces ATP from ADP in the presence of a proton gradient across the membrane. This is ATP synthase epsilon chain, chloroplastic from Trieres chinensis (Marine centric diatom).